An 83-amino-acid chain; its full sequence is UPF0297 protein CKR_1221 (83 aa).

This sequence belongs to the UPF0297 family.

The chain is UPF0297 protein CKR_1221 from Clostridium kluyveri (strain NBRC 12016).